A 539-amino-acid chain; its full sequence is Eukaryotic translation initiation factor 3 subunit L (539 aa).

Residues 306-514 form the PCI domain; the sequence is TFSDILLYIQ…IHIADTKVSH (209 aa).

It belongs to the eIF-3 subunit L family. As to quaternary structure, component of the eukaryotic translation initiation factor 3 (eIF-3) complex. The eIF-3 complex interacts with pix.

The protein resides in the cytoplasm. In terms of biological role, component of the eukaryotic translation initiation factor 3 (eIF-3) complex, which is involved in protein synthesis of a specialized repertoire of mRNAs and, together with other initiation factors, stimulates binding of mRNA and methionyl-tRNAi to the 40S ribosome. The eIF-3 complex specifically targets and initiates translation of a subset of mRNAs involved in cell proliferation. This is Eukaryotic translation initiation factor 3 subunit L from Drosophila ananassae (Fruit fly).